A 159-amino-acid polypeptide reads, in one-letter code: Large ribosomal subunit protein uL11 (159 aa).

The protein belongs to the universal ribosomal protein uL11 family. Part of the ribosomal stalk of the 50S ribosomal subunit. Interacts with L10 and the large rRNA to form the base of the stalk. L10 forms an elongated spine to which L12 dimers bind in a sequential fashion forming a multimeric L10(L12)X complex.

Forms part of the ribosomal stalk which helps the ribosome interact with GTP-bound translation factors. The chain is Large ribosomal subunit protein uL11 from Methanococcus vannielii (strain ATCC 35089 / DSM 1224 / JCM 13029 / OCM 148 / SB).